A 398-amino-acid chain; its full sequence is uncharacterized protein (398 aa).

This is an uncharacterized protein from Buchnera aphidicola subsp. Baizongia pistaciae (strain Bp).